Here is a 513-residue protein sequence, read N- to C-terminus: ATP synthase subunit alpha (513 aa).

169–176 (GDRQTGKT) contributes to the ATP binding site.

This sequence belongs to the ATPase alpha/beta chains family. As to quaternary structure, F-type ATPases have 2 components, CF(1) - the catalytic core - and CF(0) - the membrane proton channel. CF(1) has five subunits: alpha(3), beta(3), gamma(1), delta(1), epsilon(1). CF(0) has three main subunits: a(1), b(2) and c(9-12). The alpha and beta chains form an alternating ring which encloses part of the gamma chain. CF(1) is attached to CF(0) by a central stalk formed by the gamma and epsilon chains, while a peripheral stalk is formed by the delta and b chains.

The protein resides in the cell inner membrane. The enzyme catalyses ATP + H2O + 4 H(+)(in) = ADP + phosphate + 5 H(+)(out). Functionally, produces ATP from ADP in the presence of a proton gradient across the membrane. The alpha chain is a regulatory subunit. The polypeptide is ATP synthase subunit alpha (Shewanella sp. (strain ANA-3)).